The sequence spans 181 residues: Large ribosomal subunit protein uL30 (181 aa).

Belongs to the universal ribosomal protein uL30 family. In terms of assembly, part of the 50S ribosomal subunit.

This is Large ribosomal subunit protein uL30 from Hyperthermus butylicus (strain DSM 5456 / JCM 9403 / PLM1-5).